The following is a 79-amino-acid chain: uncharacterized protein (79 aa).

This is an uncharacterized protein from Escherichia coli O6:H1 (strain CFT073 / ATCC 700928 / UPEC).